The following is a 492-amino-acid chain: MKKLKITGLSLIISGLLMAQAQAAEPVYPDQLRLFSLGQEVCGDKYRPVNREEAQSVKSNIVGMMGQWQISGLANGWVIMGPGYNGEIKPGSASSTWCYPTNPATGEIPTLSALDIPDGDEVDVQWRLVHDSANFIKPTSYLAHYLGYAWVGGNHSQYVGEDMDVTRDGDGWVIRGNNDGGCDGYRCGDKTSIKVSNFAYNLDPDSFKHGDVTQSDRQLVKTVVGWAINDSDTPQSGYDVTLRYDTATNWSKTNTYGLSEKVTTKNKFKWPLVGETELSIEIAANQSWASQNGGSPTTSLSQSVRPTVPAHSKIPVKIELYKADISYPYEFKADVSYDLTLSGFLRWGGNAWYTHPDNRPNWNHTFVIGPYKDKASSIRYQWDKRYIPGEVKWWDWNWTIQQNGLPTMQNNLAKVLRPVRAGITGDFSAESQFAGNIEIGAPVPVAAASHSSRARNLSAGQGLRLEIPLDAQELSGLGFNNVSLSVTPAANQ.

The N-terminal stretch at 1 to 23 (MKKLKITGLSLIISGLLMAQAQA) is a signal peptide. Disulfide bonds link C42/C98 and C182/C187. The tract at residues 68 to 84 (WQISGLANGWVIMGPGY) is interaction with host N-linked glycan. The segment at 256-288 (YGLSEKVTTKNKFKWPLVGETELSIEIAANQSW) is part of the transmembrane beta-barrel after proteolytic activation of the toxin and insertion into the host membrane. Residues 346–355 (RWGGNAWYTH) are interaction with glycans from host GPI-anchor. The propeptide occupies 446-492 (AAASHSSRARNLSAGQGLRLEIPLDAQELSGLGFNNVSLSVTPAANQ).

Belongs to the aerolysin family. As to quaternary structure, homodimer in solution; homoheptamer in the host membrane. After binding to GPI-anchored proteins in target membranes and proteolytic removal of the C-terminal propeptide, the protein assembles into a heptameric pre-pore complex. A further conformation change leads to insertion into the host membrane. Proteolytic cleavage and subsequent release of the propeptide trigger a major conformation change, leading to the formation of a heptameric pre-pore that then inserts into the host membrane.

It is found in the secreted. The protein localises to the host cell membrane. Its function is as follows. Secreted, cytolytic toxin that forms pores in host membranes after proteolytic removal of a C-terminal propeptide, leading to destruction of the membrane permeability barrier and cell death. The pores are formed by transmembrane beta-strands and are approximately 3 nm in diameter. The sequence is that of Aerolysin-3 (ahh3) from Aeromonas hydrophila.